Reading from the N-terminus, the 590-residue chain is Muscarinic acetylcholine receptor M3 (590 aa).

Residues 1-67 (MTLHNNNTTS…DPLGGHTIWQ (67 aa)) lie on the Extracellular side of the membrane. N-linked (GlcNAc...) asparagine glycosylation is found at asparagine 6, asparagine 7, asparagine 15, asparagine 41, asparagine 48, and asparagine 53. Residues 68–91 (VVFIAFLTGVLALVTIIGNILVIV) form a helical membrane-spanning segment. Over 92–104 (AFKVNKQLKTVNN) the chain is Cytoplasmic. A helical transmembrane segment spans residues 105-125 (YFLLSLACADLIIGVISMNLF). Over 126–142 (TTYIIMNRWALGNLACD) the chain is Extracellular. An intrachain disulfide couples cysteine 141 to cysteine 221. The chain crosses the membrane as a helical span at residues 143–164 (LWLSIDYVASNASVMNLLVISF). Residues 165–184 (DRYFSITRPLTYRAKRTTKR) are Cytoplasmic-facing. The helical transmembrane segment at 185–207 (AGVMIGLAWVISFILWAPAILFW) threads the bilayer. The Extracellular portion of the chain corresponds to 208–229 (QYFVGKRTVPPGECFIQFLSEP). The chain crosses the membrane as a helical span at residues 230 to 252 (TITFGTAIAAFYMPVTIMTILYW). Over 253 to 492 (RIYKETEKRT…LIKEKKAAQT (240 aa)) the chain is Cytoplasmic. Positions 275 to 281 (AEAENFV) match the Basolateral sorting signal motif. The tract at residues 324 to 357 (AEQMDQDHSSSDSWNNNDAAASLENSASSDEEDI) is disordered. Over residues 334 to 345 (SDSWNNNDAAAS) the composition is skewed to low complexity. Serine 385 is subject to Phosphoserine. The interval 398 to 419 (SVGLERKPSKLQTQQSMDDGGS) is disordered. Residues 407–419 (KLQTQQSMDDGGS) show a composition bias toward polar residues. Residues 493-513 (LSAILLAFIITWTPYNIMVLV) form a helical membrane-spanning segment. Over 514–527 (NTFCDSCIPKTYWN) the chain is Extracellular. The chain crosses the membrane as a helical span at residues 528–547 (LGYWLCYINSTVNPVCYALC). The Cytoplasmic segment spans residues 548–590 (NKTFRNTFKMLLLCQCDKRKRRKQQYQQRQSVIFHKRVPEQAL).

It belongs to the G-protein coupled receptor 1 family. Muscarinic acetylcholine receptor subfamily. CHRM3 sub-subfamily. Homodimer; the dimers can form tetramers. Interacts with NALCN. Interacts with TMEM147.

It is found in the cell membrane. It localises to the postsynaptic cell membrane. The protein resides in the basolateral cell membrane. Its subcellular location is the endoplasmic reticulum membrane. The muscarinic acetylcholine receptor mediates various cellular responses, including inhibition of adenylate cyclase, breakdown of phosphoinositides and modulation of potassium channels through the action of G proteins. Primary transducing effect is Pi turnover. This chain is Muscarinic acetylcholine receptor M3 (CHRM3), found in Bos taurus (Bovine).